The following is a 419-amino-acid chain: Hyaluronidase-3 (419 aa).

A signal peptide spans 1-16; sequence MTMQLGLALVLGVAMC. Cystine bridges form between cysteine 42–cysteine 331, cysteine 205–cysteine 220, cysteine 356–cysteine 367, cysteine 361–cysteine 395, and cysteine 397–cysteine 406. N-linked (GlcNAc...) asparagine glycosylation is present at asparagine 69. Glutamate 129 serves as the catalytic Proton donor. N-linked (GlcNAc...) asparagine glycosylation occurs at asparagine 215. Positions 352–407 constitute an EGF-like domain; that stretch reads AAMACSHQRCHGHGRCAWQDPGQLKVFLHLHPGGSPGAWESFSCRCYWGWAGPTCQ.

This sequence belongs to the glycosyl hydrolase 56 family. N-glycosylated. As to expression, highly expressed in bladder, spleen and liver. Expressed at low levels in the kidney.

The protein localises to the secreted. It is found in the cell membrane. Its subcellular location is the cytoplasmic vesicle. The protein resides in the secretory vesicle. It localises to the acrosome. The protein localises to the endoplasmic reticulum. It is found in the early endosome. It carries out the reaction Random hydrolysis of (1-&gt;4)-linkages between N-acetyl-beta-D-glucosamine and D-glucuronate residues in hyaluronate.. Functionally, facilitates sperm penetration into the layer of cumulus cells surrounding the egg by digesting hyaluronic acid. Involved in induction of the acrosome reaction in the sperm. Involved in follicular atresia, the breakdown of immature ovarian follicles that are not selected to ovulate. Induces ovarian granulosa cell apoptosis, possibly via apoptotic signaling pathway involving CASP8 and CASP3 activation, and poly(ADP-ribose) polymerase (PARP) cleavage. Has no hyaluronidase activity in embryonic fibroblasts in vitro. Has no hyaluronidase activity in granulosa cells in vitro. This is Hyaluronidase-3 (HYAL3) from Sus scrofa (Pig).